Reading from the N-terminus, the 152-residue chain is Lipoprotein signal peptidase (152 aa).

The next 2 helical transmembrane spans lie at 55 to 75 and 85 to 105; these read NKMW…VFYM and LGIS…DRVF. Residues Asp-111 and Asp-129 contribute to the active site. Residues 124–144 form a helical membrane-spanning segment; sequence VFNIADSALCIGVVLIIIQTL.

This sequence belongs to the peptidase A8 family.

Its subcellular location is the cell membrane. It carries out the reaction Release of signal peptides from bacterial membrane prolipoproteins. Hydrolyzes -Xaa-Yaa-Zaa-|-(S,diacylglyceryl)Cys-, in which Xaa is hydrophobic (preferably Leu), and Yaa (Ala or Ser) and Zaa (Gly or Ala) have small, neutral side chains.. It participates in protein modification; lipoprotein biosynthesis (signal peptide cleavage). Functionally, this protein specifically catalyzes the removal of signal peptides from prolipoproteins. The polypeptide is Lipoprotein signal peptidase (Bacillus cereus (strain ZK / E33L)).